Reading from the N-terminus, the 283-residue chain is Probable endonuclease 4 (283 aa).

9 residues coordinate Zn(2+): histidine 69, histidine 109, glutamate 145, aspartate 179, histidine 182, histidine 216, aspartate 229, histidine 231, and glutamate 261.

It belongs to the AP endonuclease 2 family. The cofactor is Zn(2+).

It carries out the reaction Endonucleolytic cleavage to 5'-phosphooligonucleotide end-products.. In terms of biological role, endonuclease IV plays a role in DNA repair. It cleaves phosphodiester bonds at apurinic or apyrimidinic (AP) sites, generating a 3'-hydroxyl group and a 5'-terminal sugar phosphate. This is Probable endonuclease 4 from Desulfosudis oleivorans (strain DSM 6200 / JCM 39069 / Hxd3) (Desulfococcus oleovorans).